We begin with the raw amino-acid sequence, 34 residues long: Conotoxin de13a (34 aa).

4-hydroxyproline is present on residues Pro3 and Pro7. Residue Trp14 is modified to 6'-bromotryptophan. Position 18 is a 5-hydroxylysine (Lys18). Pro21 is modified (4-hydroxyproline). At Lys25 the chain carries 5-hydroxylysine. His32 bears the Histidine amide mark.

Contains 4 disulfide bonds. In terms of processing, the diastereomeric form of 5-hydroxylysine found was not conclusively established, but it is probably 5R. In terms of tissue distribution, expressed by the venom duct.

It localises to the secreted. In Conasprella delessertii (Sozon's cone), this protein is Conotoxin de13a.